A 192-amino-acid chain; its full sequence is Molybdenum cofactor cytidylyltransferase (192 aa).

Asp101 serves as a coordination point for Mg(2+).

In terms of assembly, monomer. Interacts with the Moco-binding chaperone PaoD. Requires Mg(2+) as cofactor. It depends on Mn(2+) as a cofactor.

The catalysed reaction is Mo-molybdopterin + CTP + H(+) = Mo-molybdopterin cytosine dinucleotide + diphosphate. Its function is as follows. Transfers a CMP moiety from CTP to Mo-molybdopterin (Mo-MPT) cofactor (Moco or molybdenum cofactor) to form Mo-molybdopterin cytosine dinucleotide (Mo-MCD) cofactor. Is specific for CTP; other nucleotides such as ATP and GTP cannot be utilized. Is also able to convert MPT to MCD in the absence of molybdate, however, with only one catalytic turnover. This Escherichia coli (strain K12) protein is Molybdenum cofactor cytidylyltransferase (mocA).